A 455-amino-acid polypeptide reads, in one-letter code: Bifunctional protein GlmU (455 aa).

The tract at residues 1 to 226 is pyrophosphorylase; the sequence is MSLDIVILAA…AMEVQGANDR (226 aa). Residues 8 to 11, K22, Q73, 78 to 79, 99 to 101, G136, E151, N166, and N224 contribute to the UDP-N-acetyl-alpha-D-glucosamine site; these read LAAG, GT, and YGD. D101 contacts Mg(2+). Position 224 (N224) interacts with Mg(2+). The segment at 227 to 247 is linker; it reads RQLSELERHYQLREGRRLMAQ. The tract at residues 248 to 455 is N-acetyltransferase; that stretch reads GVTLRDPARF…WKRPEKIKKS (208 aa). UDP-N-acetyl-alpha-D-glucosamine contacts are provided by R330 and K348. Residue H360 is the Proton acceptor of the active site. 2 residues coordinate UDP-N-acetyl-alpha-D-glucosamine: Y363 and N374. Acetyl-CoA is bound by residues A377, 383–384, S402, A420, and R437; that span reads NY.

This sequence in the N-terminal section; belongs to the N-acetylglucosamine-1-phosphate uridyltransferase family. The protein in the C-terminal section; belongs to the transferase hexapeptide repeat family. As to quaternary structure, homotrimer. Mg(2+) is required as a cofactor.

The protein resides in the cytoplasm. It catalyses the reaction alpha-D-glucosamine 1-phosphate + acetyl-CoA = N-acetyl-alpha-D-glucosamine 1-phosphate + CoA + H(+). The catalysed reaction is N-acetyl-alpha-D-glucosamine 1-phosphate + UTP + H(+) = UDP-N-acetyl-alpha-D-glucosamine + diphosphate. It functions in the pathway nucleotide-sugar biosynthesis; UDP-N-acetyl-alpha-D-glucosamine biosynthesis; N-acetyl-alpha-D-glucosamine 1-phosphate from alpha-D-glucosamine 6-phosphate (route II): step 2/2. It participates in nucleotide-sugar biosynthesis; UDP-N-acetyl-alpha-D-glucosamine biosynthesis; UDP-N-acetyl-alpha-D-glucosamine from N-acetyl-alpha-D-glucosamine 1-phosphate: step 1/1. Its pathway is bacterial outer membrane biogenesis; LPS lipid A biosynthesis. Functionally, catalyzes the last two sequential reactions in the de novo biosynthetic pathway for UDP-N-acetylglucosamine (UDP-GlcNAc). The C-terminal domain catalyzes the transfer of acetyl group from acetyl coenzyme A to glucosamine-1-phosphate (GlcN-1-P) to produce N-acetylglucosamine-1-phosphate (GlcNAc-1-P), which is converted into UDP-GlcNAc by the transfer of uridine 5-monophosphate (from uridine 5-triphosphate), a reaction catalyzed by the N-terminal domain. The sequence is that of Bifunctional protein GlmU from Pseudomonas putida (strain ATCC 47054 / DSM 6125 / CFBP 8728 / NCIMB 11950 / KT2440).